The primary structure comprises 829 residues: Cap-specific mRNA (nucleoside-2'-O-)-methyltransferase 1 (829 aa).

Residues 1–68 (MKRAAQASDE…DSQNSQGSMA (68 aa)) form a disordered region. The short motif at 2–16 (KRAAQASDEPLKKRK) is the Bipartite nuclear localization signal element. Low complexity predominate over residues 31–44 (QRTTSQDSSQSESL). Positions 55–68 (SRPSDSQNSQGSMA) are enriched in polar residues. The G-patch domain maps to 79–125 (YNNVSQKLMAKMGFREGEGLGKYGQGRKEIVEASTQRGRRGLGLMLK). Residues 195-199 (KTVFD) and arginine 210 each bind substrate. The 220-residue stretch at 223–442 (FFLNRAAMKM…ERYVVCKGLK (220 aa)) folds into the RrmJ-type SAM-dependent 2'-O-MTase domain. Asparagine 226 is an S-adenosyl-L-methionine binding site. Lysine 231 is a catalytic residue. S-adenosyl-L-methionine is bound by residues 269–275 (CAGPGGF) and 327–328 (DI). Aspartate 356 is a catalytic residue. A substrate-binding site is contributed by 366-368 (NLQ). The active-site Proton acceptor is lysine 396. Asparagine 431 contacts substrate. The 35-residue stretch at 745 to 779 (KTVNDPWTMAFSKSSKRKFFYNKQTKESTYDLPAT) folds into the WW domain.

The protein resides in the nucleus. The catalysed reaction is a 5'-end (N(7)-methyl 5'-triphosphoguanosine)-ribonucleoside in mRNA + S-adenosyl-L-methionine = a 5'-end (N(7)-methyl 5'-triphosphoguanosine)-(2'-O-methyl-ribonucleoside) in mRNA + S-adenosyl-L-homocysteine + H(+). Functionally, S-adenosyl-L-methionine-dependent methyltransferase that mediates mRNA cap1 2'-O-ribose methylation to the 5'-cap structure of mRNAs. Methylates the ribose of the first nucleotide of a m(7)GpppG-capped mRNA and small nuclear RNA (snRNA) to produce m(7)GpppRm (cap1). Displays a preference for cap0 transcripts. Cap1 modification is linked to higher levels of translation. May be involved in the interferon response pathway. The protein is Cap-specific mRNA (nucleoside-2'-O-)-methyltransferase 1 (cmtr1) of Danio rerio (Zebrafish).